A 446-amino-acid chain; its full sequence is Probable glucuronosyltransferase Os04g0650300 (446 aa).

Topologically, residues 1-30 are cytoplasmic; that stretch reads MKLPLLRPLWPMLSPAAGSPDSPPEPSKPS. The helical; Signal-anchor for type II membrane protein transmembrane segment at 31–51 threads the bilayer; the sequence is LPAAWLLLHALFCATSMAVGF. Topologically, residues 52 to 446 are lumenal; that stretch reads RFSRLIVYLL…TTLLNTEGQH (395 aa). An N-linked (GlcNAc...) asparagine glycan is attached at Asn-87. Positions 425–446 are disordered; sequence QQDAKPETPLKRTTLLNTEGQH.

Belongs to the glycosyltransferase 43 family.

It is found in the golgi apparatus membrane. Functionally, involved in the synthesis of glucuronoxylan hemicellulose in secondary cell walls. The protein is Probable glucuronosyltransferase Os04g0650300 of Oryza sativa subsp. japonica (Rice).